The following is a 355-amino-acid chain: MSLCTVEINLSTIKNNYLLLQDVCKTSLVGAAVKANGYGLGAIQISKALIEENCRHFFVASSEEGVNLRNALGLDINILVLNGVFEHDALELIEYNLTPVLNNLKQIEIWQKFSNLKNRLLPCYLHFNTGINRLGLSSDEIEQLINDRDLLKGLDLQYIISHLAISEEIDNPYNLEQLNRFKAYLQYFPNVKASLANSGGIFLGQDYHFDLARPGAALYGLNPLTKNPVTLKAPIIHLQNLTLDSHIGYNMTFTTKRDSVIATLPLGYADGFSRNFSNQGEVFINSRSVPIVGRVSMDLINIDVTDLPPSEIFLGQEAEIIGNYCTPNKIASIIGTIGYEVLTNLGSRYKRKYIG.

The Proton acceptor; specific for D-alanine role is filled by Lys-34. Lys-34 carries the N6-(pyridoxal phosphate)lysine modification. Residue Arg-133 coordinates substrate. The active-site Proton acceptor; specific for L-alanine is Tyr-249. Residue Met-297 participates in substrate binding.

It belongs to the alanine racemase family. Pyridoxal 5'-phosphate serves as cofactor.

The catalysed reaction is L-alanine = D-alanine. It functions in the pathway amino-acid biosynthesis; D-alanine biosynthesis; D-alanine from L-alanine: step 1/1. Its function is as follows. Catalyzes the interconversion of L-alanine and D-alanine. May also act on other amino acids. The sequence is that of Alanine racemase (alr) from Rickettsia rickettsii (strain Sheila Smith).